The chain runs to 869 residues: MTNVTPMMQQYLKIKSQYQDCLLFFRLGDFYEMFFEDAKEASRVLEITLTKRDAKKENPIPMCGVPYHSAESYIETLINEGYKVAICEQMEDPKTTKGMVKREVIRVVTPGTIMNQGGMDEKQNNYILSFIKDGATIAVSYCDVSTGELKVTKFNDESMLLNEITTINPNEIVAADQVSESLKQQMSLATETITVVDEISNEAYEVNQVEDTLMHQAVQLLLDYIHHTQKRNMNHIEDAQVYEAIDYMKMDYYAKRNLELTESIRLKSKKGTLLWLMDETKTPMGARRLKQWIDRPLIYKQAINERLDAVSQLIDRFIERDTLRNYLNQVYDIERLVGRVSYGNVNARDLIQLKHSIAEIPNIKALLDDFDDALPEQFRQLEPLNDLLDLLEKSLVEEPPISVKDGGLFKQGFNQQLDEYLEASVNGKQWLAQLQAKERERTGIKSLKISFNKVFGYFIEITRANLKGFEPADFGYNRKQTLSNAERFITDELKEKEDIILGAEDKAVELEYQLFAQLREEVKAYTERLQKQAKLISEIDCLQSFAEIAQKYNYVRPEFSDDKTLDLVDSRHPVVERVMDYNDYVPNDCRLDDDQFIYLITGPNMSGKSTYMRQVAIISIMAQMGAYVPCGSAVLPIFDQIFTRIGAADDLVSGKSTFMVEMLEAQKALTYATEDSLIIFDEIGRGTSTFDGLALAQAMIEYVAETSHAKTLFSTHYHELTTLDQSLECLKNVHVAANEYQGELIFLHKVKDGAVDDSYGIQVAKLADLPDRVIERAQVILDAFEEKDKPQPQISHLQQTESFVREPEIEDIQDKKEPETEQFQQGAFDLFETPPVESEIEAELKKINISNMTPLQALNKLSELQNQLK.

Residue 602 to 609 participates in ATP binding; that stretch reads GPNMSGKS.

It belongs to the DNA mismatch repair MutS family.

In terms of biological role, this protein is involved in the repair of mismatches in DNA. It is possible that it carries out the mismatch recognition step. This protein has a weak ATPase activity. The sequence is that of DNA mismatch repair protein MutS from Staphylococcus carnosus (strain TM300).